The chain runs to 151 residues: Small ribosomal subunit protein uS19 (151 aa).

This sequence belongs to the universal ribosomal protein uS19 family.

In terms of biological role, protein S19 forms a complex with S13 that binds strongly to the 16S ribosomal RNA. This chain is Small ribosomal subunit protein uS19 (rps19), found in Thermoplasma acidophilum (strain ATCC 25905 / DSM 1728 / JCM 9062 / NBRC 15155 / AMRC-C165).